Consider the following 524-residue polypeptide: 2-isopropylmalate synthase (524 aa).

Residues 5–267 (VIIFDTTLRD…HTNIRHSEIH (263 aa)) enclose the Pyruvate carboxyltransferase domain. Positions 14, 202, 204, and 238 each coordinate Mn(2+). The tract at residues 392-524 (KLEYLGVQSG…KTDKINTESV (133 aa)) is regulatory domain.

This sequence belongs to the alpha-IPM synthase/homocitrate synthase family. LeuA type 1 subfamily. As to quaternary structure, homodimer. The cofactor is Mn(2+).

The protein resides in the cytoplasm. The catalysed reaction is 3-methyl-2-oxobutanoate + acetyl-CoA + H2O = (2S)-2-isopropylmalate + CoA + H(+). It functions in the pathway amino-acid biosynthesis; L-leucine biosynthesis; L-leucine from 3-methyl-2-oxobutanoate: step 1/4. Catalyzes the condensation of the acetyl group of acetyl-CoA with 3-methyl-2-oxobutanoate (2-ketoisovalerate) to form 3-carboxy-3-hydroxy-4-methylpentanoate (2-isopropylmalate). The chain is 2-isopropylmalate synthase from Aeromonas hydrophila subsp. hydrophila (strain ATCC 7966 / DSM 30187 / BCRC 13018 / CCUG 14551 / JCM 1027 / KCTC 2358 / NCIMB 9240 / NCTC 8049).